We begin with the raw amino-acid sequence, 366 residues long: Peptide chain release factor 2 (366 aa).

Q251 carries the post-translational modification N5-methylglutamine.

Belongs to the prokaryotic/mitochondrial release factor family. In terms of processing, methylated by PrmC. Methylation increases the termination efficiency of RF2.

It localises to the cytoplasm. In terms of biological role, peptide chain release factor 2 directs the termination of translation in response to the peptide chain termination codons UGA and UAA. The chain is Peptide chain release factor 2 (prfB) from Listeria innocua serovar 6a (strain ATCC BAA-680 / CLIP 11262).